A 142-amino-acid polypeptide reads, in one-letter code: Large ribosomal subunit protein uL11 (142 aa).

This sequence belongs to the universal ribosomal protein uL11 family. As to quaternary structure, part of the ribosomal stalk of the 50S ribosomal subunit. Interacts with L10 and the large rRNA to form the base of the stalk. L10 forms an elongated spine to which L12 dimers bind in a sequential fashion forming a multimeric L10(L12)X complex. Post-translationally, one or more lysine residues are methylated.

Functionally, forms part of the ribosomal stalk which helps the ribosome interact with GTP-bound translation factors. The chain is Large ribosomal subunit protein uL11 from Actinobacillus succinogenes (strain ATCC 55618 / DSM 22257 / CCUG 43843 / 130Z).